The primary structure comprises 749 residues: 5-methyltetrahydropteroyltriglutamate--homocysteine methyltransferase (749 aa).

Residues 15–18 (RELK) and K114 contribute to the 5-methyltetrahydropteroyltri-L-glutamate site. L-homocysteine is bound by residues 425-427 (IGS) and E478. Residues 425–427 (IGS) and E478 each bind L-methionine. A 5-methyltetrahydropteroyltri-L-glutamate-binding site is contributed by W555. Position 593 (D593) interacts with L-homocysteine. Residue D593 participates in L-methionine binding. Residue E599 coordinates 5-methyltetrahydropteroyltri-L-glutamate. Residues H636, C638, and E660 each contribute to the Zn(2+) site. H689 acts as the Proton donor in catalysis. C721 is a binding site for Zn(2+).

The protein belongs to the vitamin-B12 independent methionine synthase family. It depends on Zn(2+) as a cofactor.

It catalyses the reaction 5-methyltetrahydropteroyltri-L-glutamate + L-homocysteine = tetrahydropteroyltri-L-glutamate + L-methionine. The protein operates within amino-acid biosynthesis; L-methionine biosynthesis via de novo pathway; L-methionine from L-homocysteine (MetE route): step 1/1. Functionally, catalyzes the transfer of a methyl group from 5-methyltetrahydrofolate to homocysteine resulting in methionine formation. The sequence is that of 5-methyltetrahydropteroyltriglutamate--homocysteine methyltransferase from Streptococcus thermophilus (strain ATCC BAA-491 / LMD-9).